Reading from the N-terminus, the 540-residue chain is Sterol O-acyltransferase 1 (540 aa).

The disordered stretch occupies residues 1–20; it reads MSLRNRLSKSGENPEQDEAQ. The Cytoplasmic portion of the chain corresponds to 1 to 128; it reads MSLRNRLSKS…LDELFEVDHI (128 aa). A Phosphoserine modification is found at serine 2. Histidine 127 serves as a coordination point for cholesterol. A helical membrane pass occupies residues 129–150; the sequence is RTIYHMFIALLILFVLSTIVVD. Over 151 to 170 the chain is Lumenal; it reads YIDEGRLVLEFNLLAYAFGK. A helical transmembrane segment spans residues 171–196; the sequence is FPTVIWTWWAMFLSTLSIPYFLFQRW. Residues 197–208 lie on the Cytoplasmic side of the membrane; that stretch reads AHGYSKSSHPLI. Residues 209–234 form a helical membrane-spanning segment; sequence YSLVHGLLFLVFQLGVLGFVPTYVVL. Residues 235–242 lie on the Lumenal side of the membrane; that stretch reads AYTLPPAS. Residues 243-266 traverse the membrane as a helical segment; sequence RFILILEQIRLIMKAHSFVRENIP. At 267–309 the chain is on the cytoplasmic side; sequence RVLNAAKEKSSKDPLPTVNQYLYFLFAPTLIYRDNYPRTPTVR. The helical transmembrane segment at 310–342 threads the bilayer; that stretch reads WGYVAMQFLQVFGCLFYVYYIFERLCAPLFRNI. Residues 343-359 lie on the Lumenal side of the membrane; sequence KQEPFSARVLVLCVFNS. A helical membrane pass occupies residues 360 to 385; the sequence is ILPGVLILFLSFFAFLHCWLNAFAEM. The Cytoplasmic segment spans residues 386 to 433; that stretch reads LRFGDRMFYKDWWNSTSYSNYYRTWNVVVHDWLYYYVYKDLLWFFSKR. An FYXDWWN motif motif is present at residues 393–399; that stretch reads FYKDWWN. Residues asparagine 405, arginine 408, asparagine 411, histidine 415, tyrosine 423, lysine 435, and serine 446 each coordinate an acyl-CoA. The helical transmembrane segment at 434–458 threads the bilayer; it reads FKSAAMLAVFALSAVVHEYALAICL. Histidine 450 is an active-site residue. At 459–464 the chain is on the lumenal side; the sequence is SYFYPV. The helical transmembrane segment at 465 to 480 threads the bilayer; sequence LFVLFMFFGMAFNFIV. At 481 to 486 the chain is on the cytoplasmic side; that stretch reads NDSRKR. The chain crosses the membrane as a helical span at residues 487–518; it reads PIWNIMVWASLFLGYGLILCFYSQEWYARQHC. A disulfide bridge links cysteine 518 with cysteine 536. Over 519–540 the chain is Lumenal; that stretch reads PLKNPTFLDYVRPRTWTCRYVF.

This sequence belongs to the membrane-bound acyltransferase family. Sterol o-acyltransferase subfamily. In terms of assembly, may form homo- or heterodimers. Interacts with UBIAD1.

The protein localises to the endoplasmic reticulum membrane. It carries out the reaction a sterol + a long-chain fatty acyl-CoA = a long-chain 3-hydroxysterol ester + CoA. It catalyses the reaction cholesterol + an acyl-CoA = a cholesterol ester + CoA. The enzyme catalyses cholesterol + (9Z)-octadecenoyl-CoA = cholesteryl (9Z-octadecenoate) + CoA. The catalysed reaction is cholesterol + hexadecanoyl-CoA = cholesteryl hexadecanoate + CoA. It carries out the reaction octadecanoyl-CoA + cholesterol = cholesteryl octadecanoate + CoA. It catalyses the reaction (9Z,12Z)-octadecadienoyl-CoA + cholesterol = cholesteryl (9Z,12Z)-octadecadienoate + CoA. The enzyme catalyses (5Z,8Z,11Z,14Z)-eicosatetraenoyl-CoA + cholesterol = cholesteryl (5Z,8Z,11Z,14Z)-eicosatetraenoate + CoA. The catalysed reaction is (9Z)-hexadecenoyl-CoA + cholesterol = cholesteryl (9Z)-hexadecenoate + CoA. It carries out the reaction (11Z)-octadecenoyl-CoA + cholesterol = cholesteryl (11Z)-octadecenoate + CoA. It catalyses the reaction (7Z)-octadecenoyl-CoA + cholesterol = cholesteryl (7Z)-octadecenoate + CoA. Catalyzes the formation of fatty acid-cholesterol esters, which are less soluble in membranes than cholesterol. Plays a role in lipoprotein assembly and dietary cholesterol absorption. Preferentially utilizes oleoyl-CoA ((9Z)-octadecenoyl-CoA) as a substrate: shows a higher activity towards an acyl-CoA substrate with a double bond at the delta-9 position (9Z) than towards saturated acyl-CoA or an unsaturated acyl-CoA with a double bond at the delta-7 (7Z) or delta-11 (11Z) positions. This Mus musculus (Mouse) protein is Sterol O-acyltransferase 1.